The sequence spans 194 residues: HTH-type transcriptional regulator BetI (194 aa).

Residues 8 to 68 form the HTH tetR-type domain; sequence EIRRAQLIDA…ATMRHVLRDL (61 aa). The segment at residues 31–50 is a DNA-binding region (H-T-H motif); that stretch reads TLASVAQRANISTGIVSHYF.

Its pathway is amine and polyamine biosynthesis; betaine biosynthesis via choline pathway [regulation]. Repressor involved in the biosynthesis of the osmoprotectant glycine betaine. It represses transcription of the choline transporter BetT and the genes of BetAB involved in the synthesis of glycine betaine. This is HTH-type transcriptional regulator BetI from Burkholderia ambifaria (strain MC40-6).